A 133-amino-acid polypeptide reads, in one-letter code: Ribulose bisphosphate carboxylase small subunit (133 aa).

The protein belongs to the RuBisCO small chain family. As to quaternary structure, heterohexadecamer of 8 large and 8 small subunits.

RuBisCO catalyzes two reactions: the carboxylation of D-ribulose 1,5-bisphosphate, the primary event in carbon dioxide fixation, as well as the oxidative fragmentation of the pentose substrate. Both reactions occur simultaneously and in competition at the same active site. Although the small subunit is not catalytic it is essential for maximal activity. This Xanthobacter flavus protein is Ribulose bisphosphate carboxylase small subunit.